Consider the following 416-residue polypeptide: Orexin/Hypocretin receptor type 1 (416 aa).

A disordered region spans residues 1–22; it reads MEPSATPGAQPGVPTSSGEPFH. The Extracellular segment spans residues 1 to 46; that stretch reads MEPSATPGAQPGVPTSSGEPFHLPPDYEDEFLRYLWRDYLYPKQYE. The tract at residues 26-41 is required for response to orexin-A; sequence DYEDEFLRYLWRDYLY. Residues 47 to 67 traverse the membrane as a helical segment; the sequence is WVLIAAYVAVFLIALVGNTLV. Residues 68–82 are Cytoplasmic-facing; it reads CLAVWRNHHMRTVTN. A helical membrane pass occupies residues 83 to 105; sequence YFIVNLSLADVLVTAICLPASLL. The Extracellular portion of the chain corresponds to 106 to 119; it reads VDITESWLFGHALC. Residues Cys-119 and Cys-202 are joined by a disulfide bond. A helical transmembrane segment spans residues 120–140; that stretch reads KVIPYLQAVSVSVAVLTLSFI. Residues 141–160 lie on the Cytoplasmic side of the membrane; sequence ALDRWYAICHPLLFKSTARR. A helical transmembrane segment spans residues 161–182; that stretch reads ARGSILGIWAVSLAVMVPQAAV. Residues 183-213 are Extracellular-facing; that stretch reads MECSSVLPELANRTRLFSVCDERWADELYPK. Residue Asn-194 is glycosylated (N-linked (GlcNAc...) asparagine). Residues 214–235 form a helical membrane-spanning segment; that stretch reads IYHSCFFFVTYLAPLGLMGMAY. Residues 236 to 298 lie on the Cytoplasmic side of the membrane; it reads FQIFRKLWGP…QMRARRKTAK (63 aa). A helical transmembrane segment spans residues 299–321; the sequence is MLMVVLLVFALCYLPISVLNVLK. The Extracellular segment spans residues 322-336; sequence RVFGMFRQASDREAV. Residues 337 to 360 form a helical membrane-spanning segment; the sequence is YACFTFSHWLVYANSAANPIIYNF. Topologically, residues 361-416 are cytoplasmic; sequence LSGKFREQFKAAFSCCLPGLGPSSSARHKSLSLQSRCSVSKVSEHVVLTTVTTVLS.

It belongs to the G-protein coupled receptor 1 family. In terms of tissue distribution, highly expressed in the brain in the prefrontal cortex, hippocampus, paraventricular thalamus, ventromedial hypothalamus, arcuate nucleus, dorsal raphe nucleus, and locus coeruleus. Not detected in the spleen, lung, liver, skeletal muscle, kidney and testis. Orexin receptor mRNA expression has also been reported in the adrenal gland, enteric nervous system, and pancreas.

The protein localises to the cell membrane. In terms of biological role, moderately selective excitatory receptor for orexin-A and, with a lower affinity, for orexin-B neuropeptide. Triggers an increase in cytoplasmic Ca(2+) levels in response to orexin-A binding. In Rattus norvegicus (Rat), this protein is Orexin/Hypocretin receptor type 1.